Consider the following 135-residue polypeptide: Large ribosomal subunit protein uL18 (135 aa).

The tract at residues 1-25 (MAQTENQKSKRIPLGKDVSTQRRLS) is disordered.

This sequence belongs to the universal ribosomal protein uL18 family. As to quaternary structure, part of the 50S ribosomal subunit; part of the 5S rRNA/L5/L18/L25 subcomplex. Contacts the 5S and 23S rRNAs.

Functionally, this is one of the proteins that bind and probably mediate the attachment of the 5S RNA into the large ribosomal subunit, where it forms part of the central protuberance. The sequence is that of Large ribosomal subunit protein uL18 from Nocardia farcinica (strain IFM 10152).